A 583-amino-acid polypeptide reads, in one-letter code: Isocitrate dehydrogenase kinase/phosphatase (583 aa).

Residues 315–321 (APGIRGM) and Lys336 each bind ATP. The active site involves Asp371.

This sequence belongs to the AceK family.

Its subcellular location is the cytoplasm. The enzyme catalyses L-seryl-[isocitrate dehydrogenase] + ATP = O-phospho-L-seryl-[isocitrate dehydrogenase] + ADP + H(+). Functionally, bifunctional enzyme which can phosphorylate or dephosphorylate isocitrate dehydrogenase (IDH) on a specific serine residue. This is a regulatory mechanism which enables bacteria to bypass the Krebs cycle via the glyoxylate shunt in response to the source of carbon. When bacteria are grown on glucose, IDH is fully active and unphosphorylated, but when grown on acetate or ethanol, the activity of IDH declines drastically concomitant with its phosphorylation. The chain is Isocitrate dehydrogenase kinase/phosphatase from Salmonella paratyphi B (strain ATCC BAA-1250 / SPB7).